We begin with the raw amino-acid sequence, 182 residues long: Crossover junction endodeoxyribonuclease RuvC (182 aa).

Catalysis depends on residues Asp-7, Glu-68, and Asp-141. 3 residues coordinate Mg(2+): Asp-7, Glu-68, and Asp-141.

This sequence belongs to the RuvC family. In terms of assembly, homodimer which binds Holliday junction (HJ) DNA. The HJ becomes 2-fold symmetrical on binding to RuvC with unstacked arms; it has a different conformation from HJ DNA in complex with RuvA. In the full resolvosome a probable DNA-RuvA(4)-RuvB(12)-RuvC(2) complex forms which resolves the HJ. It depends on Mg(2+) as a cofactor.

It is found in the cytoplasm. It carries out the reaction Endonucleolytic cleavage at a junction such as a reciprocal single-stranded crossover between two homologous DNA duplexes (Holliday junction).. Its function is as follows. The RuvA-RuvB-RuvC complex processes Holliday junction (HJ) DNA during genetic recombination and DNA repair. Endonuclease that resolves HJ intermediates. Cleaves cruciform DNA by making single-stranded nicks across the HJ at symmetrical positions within the homologous arms, yielding a 5'-phosphate and a 3'-hydroxyl group; requires a central core of homology in the junction. The consensus cleavage sequence is 5'-(A/T)TT(C/G)-3'. Cleavage occurs on the 3'-side of the TT dinucleotide at the point of strand exchange. HJ branch migration catalyzed by RuvA-RuvB allows RuvC to scan DNA until it finds its consensus sequence, where it cleaves and resolves the cruciform DNA. This Thermobifida fusca (strain YX) protein is Crossover junction endodeoxyribonuclease RuvC.